We begin with the raw amino-acid sequence, 138 residues long: Small ribosomal subunit protein uS11c (138 aa).

The interval 1–24 (MAKPIPKVGSRRNGRSSARKSARR) is disordered. Over residues 9–24 (GSRRNGRSSARKSARR) the composition is skewed to basic residues.

The protein belongs to the universal ribosomal protein uS11 family. As to quaternary structure, part of the 30S ribosomal subunit.

Its subcellular location is the plastid. It is found in the chloroplast. The chain is Small ribosomal subunit protein uS11c from Gossypium hirsutum (Upland cotton).